Consider the following 374-residue polypeptide: Outer membrane protein assembly factor BamC (374 aa).

A signal peptide spans 1-22; sequence MSKFYKSGRVTTAVIVALSLSA. Cys23 is lipidated: N-palmitoyl cysteine. Cys23 is lipidated: S-diacylglycerol cysteine.

It belongs to the BamC family. Part of the Bam complex.

Its subcellular location is the cell outer membrane. Part of the outer membrane protein assembly complex, which is involved in assembly and insertion of beta-barrel proteins into the outer membrane. This Psychromonas ingrahamii (strain DSM 17664 / CCUG 51855 / 37) protein is Outer membrane protein assembly factor BamC.